Reading from the N-terminus, the 306-residue chain is Agmatinase (306 aa).

Residues H126, D149, H151, D153, D230, and D232 each contribute to the Mn(2+) site.

This sequence belongs to the arginase family. Agmatinase subfamily. The cofactor is Mn(2+).

The enzyme catalyses agmatine + H2O = urea + putrescine. Its pathway is amine and polyamine biosynthesis; putrescine biosynthesis via agmatine pathway; putrescine from agmatine: step 1/1. Its function is as follows. Catalyzes the formation of putrescine from agmatine. In Escherichia coli O1:K1 / APEC, this protein is Agmatinase.